Here is a 506-residue protein sequence, read N- to C-terminus: Maturase K (506 aa).

This sequence belongs to the intron maturase 2 family. MatK subfamily.

The protein resides in the plastid. The protein localises to the chloroplast. Functionally, usually encoded in the trnK tRNA gene intron. Probably assists in splicing its own and other chloroplast group II introns. The polypeptide is Maturase K (Sullivantia sullivantii (Sullivant's coolwort)).